A 226-amino-acid chain; its full sequence is Ribonuclease 3 (226 aa).

The RNase III domain maps to 7–129 (LPRLCRTLGY…IIGAIYLDSD (123 aa)). Residue Glu42 coordinates Mg(2+). Asp46 is a catalytic residue. Positions 115 and 118 each coordinate Mg(2+). Glu118 is a catalytic residue. The DRBM domain occupies 156–226 (DAKTLLQEYL…AAQVLELLKK (71 aa)).

Belongs to the ribonuclease III family. In terms of assembly, homodimer. Mg(2+) is required as a cofactor.

Its subcellular location is the cytoplasm. The enzyme catalyses Endonucleolytic cleavage to 5'-phosphomonoester.. In terms of biological role, digests double-stranded RNA. Involved in the processing of primary rRNA transcript to yield the immediate precursors to the large and small rRNAs (23S and 16S). Processes some mRNAs, and tRNAs when they are encoded in the rRNA operon. Processes pre-crRNA and tracrRNA of type II CRISPR loci if present in the organism. The sequence is that of Ribonuclease 3 from Shewanella sp. (strain MR-7).